Reading from the N-terminus, the 530-residue chain is Growth-regulating factor 1 (530 aa).

A disordered region spans residues 1–41; the sequence is MDLGVRVSGHETVSSPGQTELGSGFSNKQERSGFDGEDCWR. Residues 11 to 27 show a composition bias toward polar residues; sequence ETVSSPGQTELGSGFSN. A compositionally biased stretch (basic and acidic residues) spans 28 to 41; that stretch reads KQERSGFDGEDCWR. A QLQ domain is found at 133–168; that stretch reads PFSLTQWAELEQQALIYKYITANVPVPSSLLLSLKK. Residues 196 to 240 enclose the WRC domain; it reads DPEPGRCRRTDGKKWRCSRDAVPDQKYCERHINRGRHRSRKPVEG. 2 consecutive short sequence motifs (bipartite nuclear localization signal) follow at residues 201 to 211 and 229 to 236; these read RCRRTDGKKWR and RGRHRSRK. Disordered stretches follow at residues 223-250 and 485-530; these read CERH…NAAA and STFG…APSL. The segment covering 485–508 has biased composition (low complexity); the sequence is STFGSLSNSSSASSTIIGDNNNKN. Over residues 519 to 530 the composition is skewed to polar residues; that stretch reads TLMNTSATAPSL.

This sequence belongs to the GRF family. As to quaternary structure, interacts with GIF1 and GIF2. In terms of tissue distribution, strongly expressed in actively growing and developing tissues, such as roots, upper stems, and shoot tips containing the shoot apical meristem (SAM) and flower buds. Also expressed in mature flowers, but weakly expressed in mature stems and leaves.

The protein resides in the nucleus. In terms of biological role, transcription activator that plays a role in the regulation of cell expansion in leaf and cotyledons tissues. Component of a network formed by miR396, the GRFs and their interacting factors (GIFs) acting in the regulation of meristem function, at least partially through the control of cell proliferation. microRNA396-GRF1/GRF3 regulatory module acts as a developmental regulator in the reprogramming of root cells during cyst nematode infection, leading to the formation of the syncytium. The polypeptide is Growth-regulating factor 1 (GRF1) (Arabidopsis thaliana (Mouse-ear cress)).